We begin with the raw amino-acid sequence, 327 residues long: Phenylalanine--tRNA ligase alpha subunit (327 aa).

Position 252 (Glu252) interacts with Mg(2+).

Belongs to the class-II aminoacyl-tRNA synthetase family. Phe-tRNA synthetase alpha subunit type 1 subfamily. As to quaternary structure, tetramer of two alpha and two beta subunits. Mg(2+) serves as cofactor.

It localises to the cytoplasm. It carries out the reaction tRNA(Phe) + L-phenylalanine + ATP = L-phenylalanyl-tRNA(Phe) + AMP + diphosphate + H(+). This chain is Phenylalanine--tRNA ligase alpha subunit, found in Pectobacterium atrosepticum (strain SCRI 1043 / ATCC BAA-672) (Erwinia carotovora subsp. atroseptica).